Reading from the N-terminus, the 152-residue chain is Ribosome maturation factor RimP (152 aa).

It belongs to the RimP family.

Its subcellular location is the cytoplasm. Required for maturation of 30S ribosomal subunits. The sequence is that of Ribosome maturation factor RimP from Pectobacterium atrosepticum (strain SCRI 1043 / ATCC BAA-672) (Erwinia carotovora subsp. atroseptica).